We begin with the raw amino-acid sequence, 164 residues long: MSKTPPKEDSRNRIVAVMLDEDSIGRSGPDIEHERAIAIYDLVEKNLFAPEGAGGGPFTLRIAITGNRLMFDIRREDDAPVVTHLLSLTPFRRIVKDYFMICDSYYQAIRTATPDKIEAIDMGRRGIHDEGSRTLQERLNGKVRVDFETARRLFTLISVLHWKG.

Belongs to the UPF0262 family.

This Nitrobacter hamburgensis (strain DSM 10229 / NCIMB 13809 / X14) protein is UPF0262 protein Nham_0287.